The sequence spans 295 residues: Protoheme IX farnesyltransferase 2 (295 aa).

The next 9 membrane-spanning stretches (helical) occupy residues 9-29, 36-56, 85-105, 108-128, 135-155, 163-183, 209-229, 230-250, and 263-283; these read ITKP…FFLA, LAIF…GCVF, VALV…YYVA, LAAL…SLYL, GTLV…VAVS, LTLL…IAIF, ILLY…SGYA, GMSY…MAWT, and KLFV…SVDF.

This sequence belongs to the UbiA prenyltransferase family. Protoheme IX farnesyltransferase subfamily.

The protein resides in the cell inner membrane. It carries out the reaction heme b + (2E,6E)-farnesyl diphosphate + H2O = Fe(II)-heme o + diphosphate. The protein operates within porphyrin-containing compound metabolism; heme O biosynthesis; heme O from protoheme: step 1/1. Functionally, converts heme B (protoheme IX) to heme O by substitution of the vinyl group on carbon 2 of heme B porphyrin ring with a hydroxyethyl farnesyl side group. This is Protoheme IX farnesyltransferase 2 from Pseudomonas fluorescens (strain ATCC BAA-477 / NRRL B-23932 / Pf-5).